We begin with the raw amino-acid sequence, 179 residues long: Replication restart protein DnaT (179 aa).

The segment at 155 to 179 (NGGLPKRDVNTVSEPDSQIPPGFRG) is disordered.

Belongs to the DnaT family. In terms of assembly, homooligomerizes. Interacts with PriB. Component of the replication restart primosome. Primosome assembly occurs via a 'hand-off' mechanism. PriA binds to replication forks, subsequently PriB then DnaT bind; DnaT then displaces ssDNA to generate the helicase loading substrate.

In terms of biological role, involved in the restart of stalled replication forks, which reloads the replicative helicase on sites other than the origin of replication. Can function in multiple replication restart pathways. Displaces ssDNA from a PriB-ssDNA complex. Probably forms a spiral filament on ssDNA. The sequence is that of Replication restart protein DnaT from Escherichia coli O8 (strain IAI1).